The primary structure comprises 458 residues: Argininosuccinate lyase (458 aa).

Belongs to the lyase 1 family. Argininosuccinate lyase subfamily.

The protein resides in the cytoplasm. It catalyses the reaction 2-(N(omega)-L-arginino)succinate = fumarate + L-arginine. It functions in the pathway amino-acid biosynthesis; L-arginine biosynthesis; L-arginine from L-ornithine and carbamoyl phosphate: step 3/3. The polypeptide is Argininosuccinate lyase (Geotalea daltonii (strain DSM 22248 / JCM 15807 / FRC-32) (Geobacter daltonii)).